Reading from the N-terminus, the 600-residue chain is Aspartate--tRNA(Asp/Asn) ligase (600 aa).

Glu187 is an L-aspartate binding site. An aspartate region spans residues 211-214 (QIFK). L-aspartate-binding residues include Arg233 and His463. ATP is bound at residue 233 to 235 (RDE). Position 497 (Glu497) interacts with ATP. Arg504 provides a ligand contact to L-aspartate. 549–552 (GVDR) is a binding site for ATP.

The protein belongs to the class-II aminoacyl-tRNA synthetase family. Type 1 subfamily. In terms of assembly, homodimer.

It localises to the cytoplasm. The catalysed reaction is tRNA(Asx) + L-aspartate + ATP = L-aspartyl-tRNA(Asx) + AMP + diphosphate. Aspartyl-tRNA synthetase with relaxed tRNA specificity since it is able to aspartylate not only its cognate tRNA(Asp) but also tRNA(Asn). Reaction proceeds in two steps: L-aspartate is first activated by ATP to form Asp-AMP and then transferred to the acceptor end of tRNA(Asp/Asn). The chain is Aspartate--tRNA(Asp/Asn) ligase from Wolbachia sp. subsp. Drosophila simulans (strain wRi).